Consider the following 147-residue polypeptide: Hemoglobin subunit beta (147 aa).

The Globin domain maps to E2–H147. Positions 63 and 92 each coordinate heme b.

It belongs to the globin family. Heterotetramer of two alpha chains and two beta chains. In terms of tissue distribution, red blood cells.

Involved in oxygen transport from gills to the various peripheral tissues. In Electrophorus electricus (Electric eel), this protein is Hemoglobin subunit beta (hbb).